A 363-amino-acid chain; its full sequence is D-xylulose reductase (363 aa).

Zn(2+) is bound by residues Cys41, His66, and Glu159. 183–188 (GAGPVG) provides a ligand contact to NAD(+).

It belongs to the zinc-containing alcohol dehydrogenase family. Zn(2+) serves as cofactor.

It carries out the reaction xylitol + NAD(+) = D-xylulose + NADH + H(+). The protein operates within carbohydrate degradation; L-arabinose degradation via L-arabinitol; D-xylulose 5-phosphate from L-arabinose (fungal route): step 4/5. This is D-xylulose reductase (XYL2) from Scheffersomyces stipitis (strain ATCC 58785 / CBS 6054 / NBRC 10063 / NRRL Y-11545) (Yeast).